The primary structure comprises 313 residues: MDGGNQSEGSEFLLLGMSESPEQQRILFWMFLSMYLVTVLGNVLIILAISSDSRLHTPMYFFLANLSFTDLFFVTNTIPKMLVNLQSQDKAISYAGCLTQLYFLLSLVTLDNLILAVMAYDRYVAICCPLHYVTAMSPRLCILLLSLCWVFSVLYGLIHTLLMTRVTFCGSRKIHYLFCEMYFLLRLACSNIQINHTVLXATGCFIFLIPLGFMIXSYARIVRAILRIPSATGKYKAFSTCASHLAVVSLFYGTLGMVYLQPLQTYSTKDSVATVMYAVVTPMMNPFIYSLRNKDIHGALGRLLQGKAFQKLT.

At 1–25 (MDGGNQSEGSEFLLLGMSESPEQQR) the chain is on the extracellular side. The N-linked (GlcNAc...) asparagine glycan is linked to asparagine 5. A helical transmembrane segment spans residues 26–49 (ILFWMFLSMYLVTVLGNVLIILAI). At 50 to 57 (SSDSRLHT) the chain is on the cytoplasmic side. Residues 58–79 (PMYFFLANLSFTDLFFVTNTIP) traverse the membrane as a helical segment. Residues 80–100 (KMLVNLQSQDKAISYAGCLTQ) are Extracellular-facing. An intrachain disulfide couples cysteine 97 to cysteine 189. Residues 101-120 (LYFLLSLVTLDNLILAVMAY) traverse the membrane as a helical segment. Residues 121-139 (DRYVAICCPLHYVTAMSPR) lie on the Cytoplasmic side of the membrane. The helical transmembrane segment at 140–158 (LCILLLSLCWVFSVLYGLI) threads the bilayer. Over 159-196 (HTLLMTRVTFCGSRKIHYLFCEMYFLLRLACSNIQINH) the chain is Extracellular. N-linked (GlcNAc...) asparagine glycosylation is present at asparagine 195. The chain crosses the membrane as a helical span at residues 197 to 219 (TVLXATGCFIFLIPLGFMIXSYA). Residues 220–236 (RIVRAILRIPSATGKYK) are Cytoplasmic-facing. Residues 237–259 (AFSTCASHLAVVSLFYGTLGMVY) form a helical membrane-spanning segment. Over 260–271 (LQPLQTYSTKDS) the chain is Extracellular. The chain crosses the membrane as a helical span at residues 272–291 (VATVMYAVVTPMMNPFIYSL). The Cytoplasmic portion of the chain corresponds to 292-313 (RNKDIHGALGRLLQGKAFQKLT).

It belongs to the G-protein coupled receptor 1 family.

Its subcellular location is the cell membrane. Its function is as follows. Odorant receptor. The sequence is that of Olfactory receptor 1D2 (OR1D2) from Pongo pygmaeus (Bornean orangutan).